A 317-amino-acid chain; its full sequence is Protoheme IX farnesyltransferase (317 aa).

A run of 9 helical transmembrane segments spans residues 36–56 (VMVL…ATVN), 57–77 (PVIA…SGCL), 108–128 (LAFG…ASNW), 129–149 (LAAG…SMWL), 157–177 (IVIG…AVTG), 184–204 (LVLF…LALV), 230–247 (IIWY…PVWL), 251–273 (GWLY…VQVY), and 284–304 (AAMG…SALL).

This sequence belongs to the UbiA prenyltransferase family. Protoheme IX farnesyltransferase subfamily.

Its subcellular location is the cell inner membrane. The enzyme catalyses heme b + (2E,6E)-farnesyl diphosphate + H2O = Fe(II)-heme o + diphosphate. Its pathway is porphyrin-containing compound metabolism; heme O biosynthesis; heme O from protoheme: step 1/1. Its function is as follows. Converts heme B (protoheme IX) to heme O by substitution of the vinyl group on carbon 2 of heme B porphyrin ring with a hydroxyethyl farnesyl side group. In Methylorubrum extorquens (strain CM4 / NCIMB 13688) (Methylobacterium extorquens), this protein is Protoheme IX farnesyltransferase.